The sequence spans 694 residues: Glycine--tRNA ligase beta subunit (694 aa).

Belongs to the class-II aminoacyl-tRNA synthetase family. As to quaternary structure, tetramer of two alpha and two beta subunits.

Its subcellular location is the cytoplasm. The enzyme catalyses tRNA(Gly) + glycine + ATP = glycyl-tRNA(Gly) + AMP + diphosphate. The sequence is that of Glycine--tRNA ligase beta subunit from Lactiplantibacillus plantarum (strain ATCC BAA-793 / NCIMB 8826 / WCFS1) (Lactobacillus plantarum).